Reading from the N-terminus, the 194-residue chain is ATP-dependent Clp protease proteolytic subunit (194 aa).

Serine 97 serves as the catalytic Nucleophile. Residue histidine 122 is part of the active site.

This sequence belongs to the peptidase S14 family. Fourteen ClpP subunits assemble into 2 heptameric rings which stack back to back to give a disk-like structure with a central cavity, resembling the structure of eukaryotic proteasomes.

The protein localises to the cytoplasm. The enzyme catalyses Hydrolysis of proteins to small peptides in the presence of ATP and magnesium. alpha-casein is the usual test substrate. In the absence of ATP, only oligopeptides shorter than five residues are hydrolyzed (such as succinyl-Leu-Tyr-|-NHMec, and Leu-Tyr-Leu-|-Tyr-Trp, in which cleavage of the -Tyr-|-Leu- and -Tyr-|-Trp bonds also occurs).. Its function is as follows. Cleaves peptides in various proteins in a process that requires ATP hydrolysis. Has a chymotrypsin-like activity. Plays a major role in the degradation of misfolded proteins. The protein is ATP-dependent Clp protease proteolytic subunit of Campylobacter jejuni subsp. jejuni serotype O:6 (strain 81116 / NCTC 11828).